The sequence spans 162 residues: Transcription antitermination protein RfaH (162 aa).

This sequence belongs to the RfaH family. In terms of assembly, interacts with both the nontemplate DNA and the RNA polymerase (RNAP). Monomer in solution.

Its function is as follows. Enhances distal genes transcription elongation in a specialized subset of operons that encode extracytoplasmic components. RfaH is recruited into a multi-component RNA polymerase complex by the ops element, which is a short conserved DNA sequence located downstream of the main promoter of these operons. Once bound, RfaH suppresses pausing and inhibits Rho-dependent and intrinsic termination at a subset of sites. Termination signals are bypassed, which allows complete synthesis of long RNA chains. Enhances expression of several operons involved in synthesis of lipopolysaccharides, exopolysaccharides, hemolysin, and sex factor. Also negatively controls expression and surface presentation of AG43 and possibly another AG43-independent factor that mediates cell-cell interactions and biofilm formation. The sequence is that of Transcription antitermination protein RfaH from Escherichia coli (strain K12).